A 558-amino-acid chain; its full sequence is SPATS2-like protein (558 aa).

A2 is subject to N-acetylalanine. A compositionally biased stretch (basic residues) spans 63-79 (GKKKNNKRKRSKSKQHQ). Disordered regions lie at residues 63 to 134 (GKKK…EKKI) and 157 to 201 (KLSL…KSNT). A compositionally biased stretch (basic and acidic residues) spans 80–92 (GNKDAKDKVERPE). S120 carries the post-translational modification Phosphoserine. A coiled-coil region spans residues 271-344 (LMAEMDKVKE…ARFSCDIEQL (74 aa)). The disordered stretch occupies residues 380–525 (TSGKQSNFSR…DTSEARPFRG (146 aa)). Polar residues-rich tracts occupy residues 381 to 390 (SGKQSNFSRK), 410 to 432 (SLPSTADPSHQTMPANKQNGSSN), and 440 to 456 (QYHNNRLNGPAKSQGSG). S455 bears the Phosphoserine mark. Positions 469 to 485 (HEHRRQPHNGFRPKNKG) are enriched in basic residues. Basic and acidic residues predominate over residues 513–522 (HAADTSEARP).

This sequence belongs to the SPATS2 family.

The protein localises to the cytoplasm. The protein resides in the nucleus. It localises to the nucleolus. This is SPATS2-like protein (SPATS2L) from Homo sapiens (Human).